Reading from the N-terminus, the 260-residue chain is Thiazole synthase (260 aa).

The Schiff-base intermediate with DXP role is filled by Lys-96. 1-deoxy-D-xylulose 5-phosphate-binding positions include Gly-157, 183–184 (AG), and 205–206 (AS).

It belongs to the ThiG family. Homotetramer. Forms heterodimers with either ThiH or ThiS.

It localises to the cytoplasm. It catalyses the reaction [ThiS sulfur-carrier protein]-C-terminal-Gly-aminoethanethioate + 2-iminoacetate + 1-deoxy-D-xylulose 5-phosphate = [ThiS sulfur-carrier protein]-C-terminal Gly-Gly + 2-[(2R,5Z)-2-carboxy-4-methylthiazol-5(2H)-ylidene]ethyl phosphate + 2 H2O + H(+). The protein operates within cofactor biosynthesis; thiamine diphosphate biosynthesis. Its function is as follows. Catalyzes the rearrangement of 1-deoxy-D-xylulose 5-phosphate (DXP) to produce the thiazole phosphate moiety of thiamine. Sulfur is provided by the thiocarboxylate moiety of the carrier protein ThiS. In vitro, sulfur can be provided by H(2)S. The sequence is that of Thiazole synthase from Corynebacterium glutamicum (strain ATCC 13032 / DSM 20300 / JCM 1318 / BCRC 11384 / CCUG 27702 / LMG 3730 / NBRC 12168 / NCIMB 10025 / NRRL B-2784 / 534).